The primary structure comprises 77 residues: MWHLKLCAVLMIFLLLLGQTDGSPIPEVSSAKRRPRRMTPFWRGVSLRPIGASCRDDSECITRLCRKRRCSLSVAQE.

The first 22 residues, 1-22 (MWHLKLCAVLMIFLLLLGQTDG), serve as a signal peptide directing secretion. Residues 23–37 (SPIPEVSSAKRRPRR) constitute a propeptide that is removed on maturation. 2 disulfides stabilise this stretch: Cys54–Cys65 and Cys60–Cys70.

It belongs to the LEAP2 family.

Its subcellular location is the secreted. Its function is as follows. Has an antimicrobial activity. The chain is Liver-expressed antimicrobial peptide 2 (LEAP2) from Macaca mulatta (Rhesus macaque).